A 602-amino-acid chain; its full sequence is uncharacterized protein (602 aa).

Residues 51 to 210 (QYLGTQPRDF…PFVSYQPDAD (160 aa)) enclose the Helicase ATP-binding domain. Over residues 430-439 (PHRESAHDPL) the composition is skewed to basic and acidic residues. 2 disordered regions span residues 430–452 (PHRE…TERG) and 518–538 (RAQL…ASVH). Residues 523 to 534 (KGATQPATSGAS) show a composition bias toward polar residues.

It to M.leprae ML1624.

This is an uncharacterized protein from Mycobacterium tuberculosis (strain ATCC 25618 / H37Rv).